A 428-amino-acid chain; its full sequence is Histidinol dehydrogenase (428 aa).

NAD(+)-binding residues include Y124, Q186, and N209. Residues S233, Q255, and H258 each contribute to the substrate site. Zn(2+)-binding residues include Q255 and H258. Active-site proton acceptor residues include E322 and H323. Substrate is bound by residues H323, D356, E410, and H415. D356 contacts Zn(2+). Residue H415 coordinates Zn(2+).

This sequence belongs to the histidinol dehydrogenase family. The cofactor is Zn(2+).

It catalyses the reaction L-histidinol + 2 NAD(+) + H2O = L-histidine + 2 NADH + 3 H(+). It participates in amino-acid biosynthesis; L-histidine biosynthesis; L-histidine from 5-phospho-alpha-D-ribose 1-diphosphate: step 9/9. In terms of biological role, catalyzes the sequential NAD-dependent oxidations of L-histidinol to L-histidinaldehyde and then to L-histidine. In Bacteroides fragilis (strain ATCC 25285 / DSM 2151 / CCUG 4856 / JCM 11019 / LMG 10263 / NCTC 9343 / Onslow / VPI 2553 / EN-2), this protein is Histidinol dehydrogenase.